A 178-amino-acid chain; its full sequence is MAERSTDFRPGLPSQRQVVELLDGEFARAGYDIEDVVIDAATRPPRIVVIADGDRGLDLDAVAELSRLASEQLDTLDTPPYVLEVTSPGVDRPLTEEKHYRRAQGRLAEVTLADGSTLTGRIGAVQNATVALVVREARSNLTVRDIALDAVVKAVVQVEFSPPSPRELELAGVSGKET.

Belongs to the RimP family.

It localises to the cytoplasm. Its function is as follows. Required for maturation of 30S ribosomal subunits. This Mycolicibacterium gilvum (strain PYR-GCK) (Mycobacterium gilvum (strain PYR-GCK)) protein is Ribosome maturation factor RimP.